We begin with the raw amino-acid sequence, 286 residues long: Phycobilisome 31.8 kDa linker polypeptide, phycoerythrin-associated, rod (286 aa).

Positions 2–179 (PFGPASRLGV…LVRGASSSSL (178 aa)) constitute a PBS-linker domain. The region spanning 231–286 (GKVYRIEVTGYRAKTFNNISKFRRSNQVFLVPYEKLSQEYQRIHQQGGVIASITPV) is the CpcD-like domain.

Belongs to the phycobilisome linker protein family. The phycobilisome is a hemidiscoidal structure that is composed of two distinct substructures: a core complex and six rods radiating from the core.

Its subcellular location is the cellular thylakoid membrane. Its function is as follows. Rod linker protein, associated with phycoerythrocyanin. Linker polypeptides determine the state of aggregation and the location of the disk-shaped phycobiliprotein units within the phycobilisome and modulate their spectroscopic properties in order to mediate a directed and optimal energy transfer. This is Phycobilisome 31.8 kDa linker polypeptide, phycoerythrin-associated, rod (cpeC) from Microchaete diplosiphon (Fremyella diplosiphon).